Reading from the N-terminus, the 215-residue chain is Probable transaldolase (215 aa).

Lys83 serves as the catalytic Schiff-base intermediate with substrate.

It belongs to the transaldolase family. Type 3B subfamily.

It localises to the cytoplasm. It catalyses the reaction D-sedoheptulose 7-phosphate + D-glyceraldehyde 3-phosphate = D-erythrose 4-phosphate + beta-D-fructose 6-phosphate. Its pathway is carbohydrate degradation; pentose phosphate pathway; D-glyceraldehyde 3-phosphate and beta-D-fructose 6-phosphate from D-ribose 5-phosphate and D-xylulose 5-phosphate (non-oxidative stage): step 2/3. In terms of biological role, transaldolase is important for the balance of metabolites in the pentose-phosphate pathway. This chain is Probable transaldolase, found in Methanococcus vannielii (strain ATCC 35089 / DSM 1224 / JCM 13029 / OCM 148 / SB).